The chain runs to 154 residues: MRYHQYYPVDIVNGPGTRCTLFVSGCVHECPGCYNKSTWRLNSGQPFTKEMEDKIIADLNDTRIHRQGISLSGGDPLHPQNVPDILALVQRIHAECPGKDIWVWTGYRLDELNAAQMQVVNLINVLVDGKFVQDLKDPALIWRGSSNQVVHHLR.

Positions 26, 30, and 33 each coordinate [4Fe-4S] cluster. S-adenosyl-L-methionine is bound by residues 32–34 (GCY) and glycine 74.

It belongs to the organic radical-activating enzymes family. As to quaternary structure, forms a tetramer composed of two NrdD and two NrdG subunits. The cofactor is [4Fe-4S] cluster.

Its subcellular location is the cytoplasm. It catalyses the reaction glycyl-[protein] + reduced [flavodoxin] + S-adenosyl-L-methionine = glycin-2-yl radical-[protein] + semiquinone [flavodoxin] + 5'-deoxyadenosine + L-methionine + H(+). Its function is as follows. Activation of anaerobic ribonucleoside-triphosphate reductase under anaerobic conditions by generation of an organic free radical, using S-adenosylmethionine and reduced flavodoxin as cosubstrates to produce 5'-deoxy-adenosine. This is Anaerobic ribonucleoside-triphosphate reductase-activating protein (nrdG) from Salmonella typhi.